A 130-amino-acid polypeptide reads, in one-letter code: EG45-like domain containing protein 2 (130 aa).

An N-terminal signal peptide occupies residues 1-25 (MIKMAVKFVVVMIVFAQILAPIAEA). The 103-residue stretch at 28 to 130 (GKAVYYDPPY…GNIRVVYTPI (103 aa)) folds into the Expansin-like EG45 domain. N106 carries an N-linked (GlcNAc...) asparagine glycan.

As to expression, expressed in unstressed leaves.

The protein resides in the secreted. In terms of biological role, plays a systemic role in water and solute homeostasis. The sequence is that of EG45-like domain containing protein 2 (EGC2) from Arabidopsis thaliana (Mouse-ear cress).